Consider the following 512-residue polypeptide: Mucin-13 (512 aa).

Positions 1-18 are cleaved as a signal peptide; sequence MKAIIHLTLLALLSVNTA. Residues 19–421 lie on the Extracellular side of the membrane; it reads TNQGNSADAV…GLDCKDKFQL (403 aa). The span at 22–38 shows a compositional bias: polar residues; it reads GNSADAVTTTETATSGP. Disordered regions lie at residues 22 to 67 and 133 to 176; these read GNSA…PTAT and MVPS…PSNP. Over residues 53-67 the composition is skewed to low complexity; it reads TASTTANTPSFPTAT. Residues 135–176 show a composition bias toward polar residues; it reads PSETQSNNEMSPTTEDNQSSGPPTGTALLETSTLNSTGPSNP. N-linked (GlcNAc...) asparagine glycans are attached at residues Asn-151 and Asn-169. Residues 173 to 211 enclose the EGF-like 1 domain; that stretch reads PSNPCQDDPCADNSLCVKLHNTSFCLCLEGYYYNSSTCK. Cystine bridges form between Cys-177–Cys-188, Cys-182–Cys-197, and Cys-199–Cys-210. N-linked (GlcNAc...) asparagine glycans are attached at residues Asn-193, Asn-206, Asn-284, and Asn-332. An SEA domain is found at 212-336; that stretch reads KGKVFPGKIS…DYYGCNQTAD (125 aa). 2 EGF-like domains span residues 322–361 and 363–404; these read LTLR…PFCV and SSLK…GNCQ. 6 disulfide bridges follow: Cys-326-Cys-338, Cys-331-Cys-344, Cys-346-Cys-360, Cys-367-Cys-378, Cys-371-Cys-389, and Cys-391-Cys-403. A helical membrane pass occupies residues 422-442; that stretch reads ILTIVGTIAGIVILSMIIALI. Residues 443–512 lie on the Cytoplasmic side of the membrane; it reads VTARSNNKTK…RHSSMPRPDY (70 aa). Over residues 493 to 505 the composition is skewed to polar residues; that stretch reads RDSQMQNPYSRHS. A disordered region spans residues 493-512; the sequence is RDSQMQNPYSRHSSMPRPDY.

In terms of assembly, homodimer of beta subunits. Cleaved into two subunits, alpha and beta, probably between the first EGF domain and the SEA domain. Beta subunit contains the cytoplasmic tail and alpha subunit the extracellular tail. The homooligomerization into dimers is dependent on intrachain disulfide bonds. Post-translationally, highly N-glycosylated. As to expression, highly expressed in epithelial tissues, particularly those of the gastrointestinal and respiratory tracts, such as large intestine and trachea, followed by kidney, small intestine, appendix and stomach.

It is found in the cell membrane. The protein localises to the apical cell membrane. Its subcellular location is the secreted. Functionally, epithelial and hemopoietic transmembrane mucin that may play a role in cell signaling. The polypeptide is Mucin-13 (MUC13) (Homo sapiens (Human)).